A 128-amino-acid polypeptide reads, in one-letter code: Large-conductance mechanosensitive channel (128 aa).

2 helical membrane-spanning segments follow: residues 10-30 (FAMR…GAFG) and 76-96 (GMFI…FLMI).

It belongs to the MscL family. In terms of assembly, homopentamer.

Its subcellular location is the cell inner membrane. Channel that opens in response to stretch forces in the membrane lipid bilayer. May participate in the regulation of osmotic pressure changes within the cell. This is Large-conductance mechanosensitive channel from Actinobacillus succinogenes (strain ATCC 55618 / DSM 22257 / CCUG 43843 / 130Z).